Here is a 392-residue protein sequence, read N- to C-terminus: Vascular endothelial growth factor A, long form (392 aa).

Disordered stretches follow at residues 1 to 44 and 73 to 174; these read MTDR…VEGV and DKPI…GPGR. The segment covering 89–104 has biased composition (basic and acidic residues); it reads PGPEKRGEEEKEEERG. 2 stretches are compositionally biased toward low complexity: residues 121–143 and 158–174; these read AAVCADSAPAARAPQAPARASVP and PRSPSRRGSASRAGPGR. 3 cysteine pairs are disulfide-bonded: C229-C271, C260-C305, and C264-C307. Residue N278 is glycosylated (N-linked (GlcNAc...) asparagine). Residues 309–320 are compositionally biased toward basic and acidic residues; the sequence is PKKDRTKPEKKS. The disordered stretch occupies residues 309 to 337; that stretch reads PKKDRTKPEKKSVRGKGKGQKRKRKKSRF. The segment covering 321–337 has biased composition (basic residues); sequence VRGKGKGQKRKRKKSRF.

The protein belongs to the PDGF/VEGF growth factor family. As to quaternary structure, homodimer; disulfide-linked. Also found as heterodimer with PGF. Interacts with NRP1. Interacts with isoform 2 of BSG. Interacts with CD82; this interaction inhibits VEGFA-mediated signaling pathway. In terms of processing, produced by use of an alternative upstream CUG codon and post-translationally processed into the N-terminal N-VEGF form and the C-terminal secreted VEGFA form. In terms of tissue distribution, in developing embryos, expressed mainly in the choroid plexus, paraventricular neuroepithelium, placenta and kidney glomeruli. Also found in bronchial epithelium, adrenal gland and in seminiferous tubules of testis. High expression continues in kidney glomeruli and choroid plexus in adults.

The protein localises to the cytoplasm. The protein resides in the nucleus. Its subcellular location is the secreted. It localises to the endoplasmic reticulum. It is found in the golgi apparatus. The protein localises to the extracellular space. The protein resides in the extracellular matrix. Its subcellular location is the cell membrane. Functionally, participates in the induction of key genes involved in the response to hypoxia and in the induction of angiogenesis such as HIF1A. Involved in protecting cells from hypoxia-mediated cell death. In terms of biological role, growth factor active in angiogenesis, vasculogenesis and endothelial cell growth. Induces endothelial cell proliferation, promotes cell migration, inhibits apoptosis and induces permeabilization of blood vessels. Binds to the FLT1/VEGFR1 and KDR/VEGFR2 receptors, heparan sulfate and heparin. Binds to the NRP1/neuropilin-1 receptor. Binding to NRP1 receptor initiates a signaling pathway needed for motor neuron axon guidance and cell body migration, including for the caudal migration of facial motor neurons from rhombomere 4 to rhombomere 6 during embryonic development. Also binds the DEAR/FBXW7-AS1 receptor. May play a role in increasing vascular permeability during lactation, when increased transport of molecules from the blood is required for efficient milk protein synthesis. This is Vascular endothelial growth factor A, long form (Vegfa) from Mus musculus (Mouse).